A 94-amino-acid polypeptide reads, in one-letter code: Neutrophil defensin 6 (94 aa).

An N-terminal signal peptide occupies residues 1–19; that stretch reads MRTIAILAAILLFALLAQA. A propeptide spanning residues 20–61 is cleaved from the precursor; the sequence is KSLQETADEAATQEQPGEDDQDLAVSFEENGLSTLRASGSQA. Disulfide bonds link cysteine 65-cysteine 93, cysteine 67-cysteine 82, and cysteine 72-cysteine 92.

The protein belongs to the alpha-defensin family.

It localises to the secreted. In terms of biological role, defensins 6 and 7 have bacteriostatic activity against Gram-positive bacteria S.aureus and L.monocytogenes and Gram-negative bacterium E.coli and antifungal activity against C.neoformans. Defensin 7 has microbicidial activity against Gram-positive bacteria S.aureus and L.monocytogenes. This chain is Neutrophil defensin 6, found in Macaca mulatta (Rhesus macaque).